A 354-amino-acid polypeptide reads, in one-letter code: Guanine nucleotide-binding protein G(o) subunit alpha (354 aa).

Residue Gly-2 is the site of N-myristoyl glycine attachment. Cys-3 carries S-palmitoyl cysteine lipidation. The 323-residue stretch at 32–354 (KDIKLLLLGA…ANNLRGCGLY (323 aa)) folds into the G-alpha domain. Positions 35–48 (KLLLLGAGESGKST) are G1 motif. GTP is bound by residues 40–47 (GAGESGKS), 176–182 (LRTRVKT), 201–205 (DVGGQ), 270–273 (NKKD), and Ala-326. 2 residues coordinate Mg(2+): Ser-47 and Thr-182. Residues 174 to 182 (DILRTRVKT) are G2 motif. The interval 197–206 (FKLFDVGGQR) is G3 motif. Residues 266–273 (ILFLNKKD) form a G4 motif region. The tract at residues 324–329 (TCATDT) is G5 motif.

It belongs to the G-alpha family. G(i/o/t/z) subfamily. As to quaternary structure, g proteins are composed of 3 units; alpha, beta and gamma. The alpha chain contains the guanine nucleotide binding site.

Functionally, guanine nucleotide-binding proteins (G proteins) are involved as modulators or transducers in various transmembrane signaling systems. The G(o) protein function is not clear. In Planorbella trivolvis (Marsh rams-horn), this protein is Guanine nucleotide-binding protein G(o) subunit alpha.